The sequence spans 908 residues: MKSGVAQIKPSSGHDRRENLNSYQRNSSPEDRYEEQERSPRDRDYFDYSRSDYEHSRRGHSYDSSMESRNRDREKRRERERDTDRKRSRKSPSPGRRNPETSVTQSSPAQDEPATKKKKDELDPLLTRTGGAYIPPAKLRMMQEQITDKNSLAYQRMSWEALKKSINGLINKVNISNISIIIQELLQENIVRGRGLLSRSVLQAQSASPIFTHVYAALVAIINSKFPQIGELILKRLILNFRKGYRRNDKQLCLTASKFVAHLINQNVAHEVLCLEMLTLLLERPTDDSVEVAIGFLKECGLKLTQVSPRGINAIFGRLRNILHESEIDKRVQYMIEVMFAVRKDGFKDHPIILEGLDLVEEDDQFTHMLPLEDDYNPEDVLNVFKMDPNFMENEEKYKAIKKEILDEGDTDSNTDQDAGSSEEDEEEEEEEGEEDEEGQKVTIHDKTEINLVSFRRTIYLAIQSSLDFEECAHKLLKMEFPESQTKELCNMILDCCAQQRTYEKFFGLLAGRFCMLKKEYMESFEGIFKEQYDTIHRLETNKLRNVAKMFAHLLYTDSLPWSVLECIKLSEETTTSSSRIFVKIFFQELCEYMGLPKLNARLKDETLQPFFEGLLPRDNPRNTRFAINFFTSIGLGGLTDELREHLKNTPKVIVAQKPDVEQNKSSPSSSSSASSSSESDSSDSDSDSSDSSSESSSEESDSSSISSHSSASANDVRKKGHGKTRSKEVDKLIRNQQTNDRKQKERRQEHGHQETRTERERRSEKHRDQNSRDSNWRDPITKYTSDKDVPSERNNYSRVANDRDQEMHIDLENKHGDPKKKRGERRNSFSENEKHTHRNKDSENFRRKDRSKSREMNRRHSGSRSDEDRYQNGAERRWEKSSRYSEQSRESKKNQDRRREKSPAKQK.

The segment at 1 to 130 (MKSGVAQIKP…ELDPLLTRTG (130 aa)) is disordered. The segment covering 28–56 (SPEDRYEEQERSPRDRDYFDYSRSDYEHS) has biased composition (basic and acidic residues). 2 positions are modified to phosphoserine: Ser39 and Ser61. The segment covering 66-85 (MESRNRDREKRRERERDTDR) has biased composition (basic and acidic residues). Residues 100-109 (ETSVTQSSPA) are compositionally biased toward polar residues. Ser107 carries the post-translational modification Phosphoserine. The segment covering 113–122 (PATKKKKDEL) has biased composition (basic and acidic residues). Positions 163–346 (KKSINGLINK…EVMFAVRKDG (184 aa)) constitute an MIF4G domain. Residues 404 to 443 (EILDEGDTDSNTDQDAGSSEEDEEEEEEEGEEDEEGQKVT) are disordered. Over residues 407-438 (DEGDTDSNTDQDAGSSEEDEEEEEEEGEEDEE) the composition is skewed to acidic residues. Residues 454-570 (SFRRTIYLAI…PWSVLECIKL (117 aa)) form the MI domain. The interval 654 to 908 (IVAQKPDVEQ…RREKSPAKQK (255 aa)) is disordered. Low complexity-rich tracts occupy residues 666 to 680 (SSPSSSSSASSSSES) and 703 to 714 (SSSISSHSSASA). Composition is skewed to basic and acidic residues over residues 726 to 792 (RSKE…DVPS), 801 to 817 (ANDRDQEMHIDLENKHG), and 826 to 908 (RRNS…AKQK). A Phosphoserine modification is found at Ser786. Ser829 carries the post-translational modification Phosphoserine.

This sequence belongs to the CWC22 family. In terms of assembly, component of the pre-catalytic spliceosome B and the catalytic spliceosome C complexes. Component of the minor spliceosome, which splices U12-type introns. Interacts with EIF4A3 and PRPF19 in an RNA-independent manner. Direct interaction with EIF4A3 is mediated by the MIF4G domain. Full interaction with EIF4A3 occurs only when EIF4A3 is not part of the EJC and prevents EIF4A3 binding to RNA.

The protein resides in the nucleus. It localises to the nucleus speckle. Required for pre-mRNA splicing as component of the spliceosome. As a component of the minor spliceosome, involved in the splicing of U12-type introns in pre-mRNAs. Promotes exon-junction complex (EJC) assembly. Hinders EIF4A3 from non-specifically binding RNA and escorts it to the splicing machinery to promote EJC assembly on mature mRNAs. Through its role in EJC assembly, required for nonsense-mediated mRNA decay. This is Pre-mRNA-splicing factor CWC22 homolog (CWC22) from Pongo abelii (Sumatran orangutan).